Consider the following 33-residue polypeptide: Beta-theraphotoxin-Cm1b (33 aa).

Intrachain disulfides connect C2/C17, C9/C22, and C16/C29. L33 bears the Leucine amide mark.

This sequence belongs to the neurotoxin 10 (Hwtx-1) family. 04 (CcoTx1) subfamily. In terms of tissue distribution, expressed by the venom gland.

The protein localises to the secreted. In terms of biological role, inhibits several voltage-gated sodium channels and only one voltage-gated calcium channel (Cav2.2/CACNA1B (IC(50)=1.1 uM) and Nav1.2/SCN2A (IC(50)=3.7-80 nM), Nav1.3/SCN3A (IC(50)=88-5570 nM), Nav1.1/SCN1A (IC(50)=170-407 nM), Nav1.7/SCN9A (IC(50)=95.5-230 nM), Nav1.6/SCN6A (IC(50)=49.9-3990 nM), Nav1.4/SCN4A (IC(50)=113-400 nM or &gt;10 uM), Nav1.5/SCN5A (IC(50)=1524-1634 nM or &gt;10 uM)). The toxin acts by shifting the voltage dependence of channel activation to more depolarized potentials and by blocking the inward component of the sodium current. It shows moderate affinity for lipid bilayers without cholesterol and high affinity for lipid bilayers containing cholesterol. In vivo, this toxin causes general ataxia, lack of response to stimuli, and semiparalysis. After a few minutes, the mice are unable to stand, and breathing is reduced in rhythm and intensity. Symptoms gradually increase with progressive slowing of breathing and flaccid paralysis; death occurred within 10 to 20 minutes post injection. Animals remain totally flaccid, and no symptoms of excitatory neurotoxicity are observed. This chain is Beta-theraphotoxin-Cm1b, found in Ceratogyrus marshalli (Straighthorned baboon tarantula).